The primary structure comprises 203 residues: Translation initiation factor IF-3 (203 aa).

The protein belongs to the IF-3 family. In terms of assembly, monomer.

Its subcellular location is the cytoplasm. IF-3 binds to the 30S ribosomal subunit and shifts the equilibrium between 70S ribosomes and their 50S and 30S subunits in favor of the free subunits, thus enhancing the availability of 30S subunits on which protein synthesis initiation begins. This Corynebacterium efficiens (strain DSM 44549 / YS-314 / AJ 12310 / JCM 11189 / NBRC 100395) protein is Translation initiation factor IF-3.